Consider the following 223-residue polypeptide: Phosphoribosylformylglycinamidine synthase subunit PurQ (223 aa).

The 222-residue stretch at 2–223 folds into the Glutamine amidotransferase type-1 domain; the sequence is KVAIIRFPGT…LLENFINFNF (222 aa). C84 serves as the catalytic Nucleophile. Catalysis depends on residues H192 and E194.

Part of the FGAM synthase complex composed of 1 PurL, 1 PurQ and 2 PurS subunits.

The protein resides in the cytoplasm. It carries out the reaction N(2)-formyl-N(1)-(5-phospho-beta-D-ribosyl)glycinamide + L-glutamine + ATP + H2O = 2-formamido-N(1)-(5-O-phospho-beta-D-ribosyl)acetamidine + L-glutamate + ADP + phosphate + H(+). The catalysed reaction is L-glutamine + H2O = L-glutamate + NH4(+). The protein operates within purine metabolism; IMP biosynthesis via de novo pathway; 5-amino-1-(5-phospho-D-ribosyl)imidazole from N(2)-formyl-N(1)-(5-phospho-D-ribosyl)glycinamide: step 1/2. Part of the phosphoribosylformylglycinamidine synthase complex involved in the purines biosynthetic pathway. Catalyzes the ATP-dependent conversion of formylglycinamide ribonucleotide (FGAR) and glutamine to yield formylglycinamidine ribonucleotide (FGAM) and glutamate. The FGAM synthase complex is composed of three subunits. PurQ produces an ammonia molecule by converting glutamine to glutamate. PurL transfers the ammonia molecule to FGAR to form FGAM in an ATP-dependent manner. PurS interacts with PurQ and PurL and is thought to assist in the transfer of the ammonia molecule from PurQ to PurL. The chain is Phosphoribosylformylglycinamidine synthase subunit PurQ from Campylobacter jejuni subsp. jejuni serotype O:2 (strain ATCC 700819 / NCTC 11168).